A 1041-amino-acid chain; its full sequence is Toll-like receptor 8 (1041 aa).

A signal peptide spans 1-26 (MENMFLQSSMLTCIFLLISGSCELCA). The Extracellular portion of the chain corresponds to 27-827 (EENFSRSYPC…ELTTCVSDVT (801 aa)). N-linked (GlcNAc...) asparagine glycans are attached at residues Asn29, Asn42, Asn80, Asn88, and Asn115. An intrachain disulfide couples Cys36 to Cys49. 6 LRR repeats span residues 126–147 (NLRE…LPES), 148–168 (LTEL…GISR), 171–193 (NLKN…TNIE), 202–223 (NLEL…LPSS), 224–244 (LRKL…DFKG), and 247–268 (NLTL…FPCV). A glycan (N-linked (GlcNAc...) asparagine) is linked at Asn160. Cys181 and Cys187 are joined by a disulfide. A glycan (N-linked (GlcNAc...) asparagine) is linked at Asn247. 2 cysteine pairs are disulfide-bonded: Cys257/Cys270 and Cys260/Cys267. Residues Asn285 and Asn293 are each glycosylated (N-linked (GlcNAc...) asparagine). LRR repeat units follow at residues 288 to 309 (QLRY…WFKN), 312 to 334 (HLKV…AFLT), and 338 to 360 (RLEI…INIS). Residues Asn358 and Asn362 are each glycosylated (N-linked (GlcNAc...) asparagine). 3 LRR repeats span residues 368 to 389 (SLRA…DFQP), 395 to 416 (NLST…LFQN), and 419 to 440 (NLEI…TRQS). 2 N-linked (GlcNAc...) asparagine glycosylation sites follow: Asn395 and Asn416. The N-linked (GlcNAc...) asparagine glycan is linked to Asn443. Cys479 and Cys509 form a disulfide bridge. LRR repeat units lie at residues 482 to 503 (YGKA…QFEN), 506 to 527 (DIAC…TEFS), 531 to 551 (HVKY…SALT), and 555 to 577 (DLEV…THHL). Residues Asn511 and Asn546 are each glycosylated (N-linked (GlcNAc...) asparagine). N-linked (GlcNAc...) asparagine glycans are attached at residues Asn582 and Asn590. 7 LRR repeats span residues 585–606 (NLKV…YNLE), 609–630 (SLVE…DDNR), 640–661 (NLTR…AFLN), 665–685 (SLTE…TLLQ), 689–710 (RLEL…LSDF), 713–734 (SLRT…FLSE), and 737–758 (SLKH…ALET). 2 N-linked (GlcNAc...) asparagine glycosylation sites follow: Asn640 and Asn680. Asn752 is a glycosylation site (N-linked (GlcNAc...) asparagine). In terms of domain architecture, LRRCT spans 772 to 824 (NPFECTCDIGDFRRWMDEHLNVKIPRLVDVICASPGDQRGKSIVSLELTTCVS). Cys776 and Cys803 are disulfide-bonded. The helical transmembrane segment at 828–848 (AVILFFFTFFITTMVMLAALA) threads the bilayer. Residues 849–1041 (HHLFYWDVWF…NMYVDSIKQY (193 aa)) lie on the Cytoplasmic side of the membrane. The 145-residue stretch at 878–1022 (TFYDAYISYD…LFWQTLRNVV (145 aa)) folds into the TIR domain.

This sequence belongs to the Toll-like receptor family. In terms of assembly, homodimer. Interacts with MYD88 via their respective TIR domains. Interacts with UNC93B1. Interacts with BTK. Interacts with SMPDL3B. Ubiquitinated by RNF216; leading to degradation by the proteasome. Post-translationally, proteolytic processing occurs in monocytes and monocyte-derived macrophages by both furin-like proprotein convertase and cathepsins. The cleavage is necessary for dimer formation and subsequent activation. Expressed in myeloid dendritic cells, monocytes, and monocyte-derived dendritic cells.

It is found in the endosome membrane. With respect to regulation, activated by RNAs having enough uridines. In terms of biological role, endosomal receptor that plays a key role in innate and adaptive immunity. Controls host immune response against pathogens through recognition of RNA degradation products specific to microorganisms that are initially processed by RNASET2. Recognizes GU-rich single-stranded RNA (GU-rich RNA) derived from SARS-CoV-2, SARS-CoV-1 and HIV-1 viruses. Upon binding to agonists, undergoes dimerization that brings TIR domains from the two molecules into direct contact, leading to the recruitment of TIR-containing downstream adapter MYD88 through homotypic interaction. In turn, the Myddosome signaling complex is formed involving IRAK4, IRAK1, TRAF6, TRAF3 leading to activation of downstream transcription factors NF-kappa-B and IRF7 to induce pro-inflammatory cytokines and interferons, respectively. The chain is Toll-like receptor 8 from Homo sapiens (Human).